The sequence spans 932 residues: Serine/threonine-protein kinase PknD (932 aa).

The region spanning 4–291 (YDIVRIIGKG…ELKEDIESHL (288 aa)) is the Protein kinase domain. Residues 10–18 (IGKGGMGEV) and Lys-33 contribute to the ATP site. The active-site Proton acceptor is the Asp-138.

Belongs to the protein kinase superfamily. Ser/Thr protein kinase family. Autophosphorylated on serine and threonine residues.

It catalyses the reaction L-seryl-[protein] + ATP = O-phospho-L-seryl-[protein] + ADP + H(+). The catalysed reaction is L-threonyl-[protein] + ATP = O-phospho-L-threonyl-[protein] + ADP + H(+). Together with the serine/threonine kinase Pkn1, may play a role in the specific interactions with host proteins during intracellular growth. The chain is Serine/threonine-protein kinase PknD from Chlamydia pneumoniae (Chlamydophila pneumoniae).